The following is a 496-amino-acid chain: Cytochrome P450 4ae1 (496 aa).

Cys443 serves as a coordination point for heme.

The protein belongs to the cytochrome P450 family. Requires heme as cofactor.

The protein resides in the endoplasmic reticulum membrane. The protein localises to the microsome membrane. Its function is as follows. May be involved in the metabolism of insect hormones and in the breakdown of synthetic insecticides. In Drosophila melanogaster (Fruit fly), this protein is Cytochrome P450 4ae1 (Cyp4ae1).